Here is a 1041-residue protein sequence, read N- to C-terminus: MAFFNPYFKSKNKGSDMPPKQSMSFTKQHKTKESAFLSITPECIIKPKSSKLLKKYNGEQPRLFYNGEPVLLYTVREISQWPVKDIMKVNNGTVDGSCNVVSTSHEPDSPVKNNCEETVVFHIYEQCVFCAHDVSYEYLPWRYKRFLSPTGTIISLIGKTEDGTDVCVNVHGQAYYFYVAMKDEAATRDAVSKVMSNLEKESSSCSYVMKSVNKMSLMGFNTNTSSYLMMIFSNHFVGKEAARNLKDLDFEIFEHLVEPNTRFLVDNEFCSFGWYSLKTPYVRQTSKDSNCELELDCCVGDLQVLRDRVDWPNYKCMAFDIECLSGSVDDAFPDATNPDDIIIQISCVCFDIKNTIETQHLFTLGSCAEIPGVYIYECASEYELIESFLTFVRVYGPNFITGYNINAFDIPYVIGRCRYYNIQCGAFTKMKRGRMTCFKGMESFLNRCQCKVTISGIVIIDMYRVCMDKVSAPNHKLDTVVDMLLGEKKHSVSYKQIPVLFRRDDDGRAVVGAYCVHDSVLVHKLFCKLLFHYEASAIARLSNISINKVVFDGQQSRIFTCMLAAARREGLIIPSIDEAGEDTYQGATVLEPKTGFYNTPVAVFDFASLYPSIIQAYNLCYCTLITDNYVASLREEDITMVTTNTGRVHRFVKPHVRKSILSQLLTSWLAERKAVREKLKHCKDPLMQILLDKQQLALKLTCNAVYGFTGVSKGMFPCLAIAESVTAQGRQLLAVTKQYICDRFNDWTFLTQIAPELVDCPVDSNRFKIDVVYGDTDSVFVLLCGIENADRLYSALPNFVAHITKTLFPPPIKLEVDKVFEKLLLLCKKRYVGVLHGEEKLSMKGIDLVRRNVCGFVKNTTLAVIKSLFSDNVISEAVQKMSGMTQDQVCKEGLPPGFFKLVALITDARERLYENRVDIHELQLSATLTQACDKYKQQNLPHLTVVRKKLERREEIPNTGDRIFYVLLAHPDERVANYVIAEDPDYVETHRLQINCSKYFSNLISSITHSISPIFPEFISKPDRFLMSCVPRKTYPKPILN.

The interval 1 to 23 (MAFFNPYFKSKNKGSDMPPKQSM) is disordered.

This sequence belongs to the DNA polymerase type-B family.

The protein resides in the host nucleus. The catalysed reaction is DNA(n) + a 2'-deoxyribonucleoside 5'-triphosphate = DNA(n+1) + diphosphate. It catalyses the reaction Endonucleolytic cleavage to 5'-phosphomonoester.. Functionally, replicates viral genomic DNA. The replication complex is composed of six viral proteins: the DNA polymerase, processivity factor, primase, primase-associated factor, helicase, and ssDNA-binding protein. Additionally, the polymerase contains an intrinsic ribonuclease H (RNase H) activity that specifically degrades RNA/DNA heteroduplexes or duplex DNA substrates in the 5' to 3' direction. Therefore, it can catalyze the excision of the RNA primers that initiate the synthesis of Okazaki fragments at a replication fork during viral DNA replication. This is DNA polymerase catalytic subunit from Elephantid herpesvirus 1 (isolate Asian elephant/Berlin/Kiba/1998) (EIHV-1).